Here is a 176-residue protein sequence, read N- to C-terminus: Ribosome maturation factor RimM (176 aa).

The region spanning 97–176 (EDEFYWRDLI…QILVDWDPDF (80 aa)) is the PRC barrel domain.

The protein belongs to the RimM family. In terms of assembly, binds ribosomal protein uS19.

It is found in the cytoplasm. Functionally, an accessory protein needed during the final step in the assembly of 30S ribosomal subunit, possibly for assembly of the head region. Essential for efficient processing of 16S rRNA. May be needed both before and after RbfA during the maturation of 16S rRNA. It has affinity for free ribosomal 30S subunits but not for 70S ribosomes. The chain is Ribosome maturation factor RimM from Shewanella sp. (strain MR-4).